A 73-amino-acid polypeptide reads, in one-letter code: Translation initiation factor IF-1 (73 aa).

The S1-like domain occupies Met1 to Lys73.

This sequence belongs to the IF-1 family. As to quaternary structure, component of the 30S ribosomal translation pre-initiation complex which assembles on the 30S ribosome in the order IF-2 and IF-3, IF-1 and N-formylmethionyl-tRNA(fMet); mRNA recruitment can occur at any time during PIC assembly.

The protein resides in the cytoplasm. Functionally, one of the essential components for the initiation of protein synthesis. Stabilizes the binding of IF-2 and IF-3 on the 30S subunit to which N-formylmethionyl-tRNA(fMet) subsequently binds. Helps modulate mRNA selection, yielding the 30S pre-initiation complex (PIC). Upon addition of the 50S ribosomal subunit IF-1, IF-2 and IF-3 are released leaving the mature 70S translation initiation complex. This chain is Translation initiation factor IF-1, found in Salinispora arenicola (strain CNS-205).